A 188-amino-acid chain; its full sequence is HTH-type transcriptional regulator QacR (188 aa).

The HTH tetR-type domain maps to 1-61 (MNLKDKILGV…EILNIEESKW (61 aa)). Positions 24–43 (TTGEIVKLSESSKGNLYYHF) form a DNA-binding region, H-T-H motif.

Homodimer. Binds cooperatively to DNA as a pair of dimers.

Transcriptional repressor of qacA. Binds to IR1, an unusually long 28 bp operator, which is located downstream from the qacA promoter and overlaps its transcription start site. QacR is induced from its IR1 site by binding to one of many structurally dissimilar cationic lipophilic compounds, which are also substrates of QacA. The chain is HTH-type transcriptional regulator QacR (qacR) from Staphylococcus aureus (strain Mu50 / ATCC 700699).